Consider the following 1122-residue polypeptide: Midnolin homolog (1122 aa).

The 75-residue stretch at 69–143 (INLNISTTTG…IILIPNVETG (75 aa)) folds into the Ubiquitin-like domain. Residues 210-300 (GGASGSSINA…SGQRSSGRIG (91 aa)) form a required for interaction with Pc region. Disordered stretches follow at residues 257–399 (VGGS…STLN), 596–630 (KHRHYHGQGHGHGHGNGHSSSSSSSSSSSSSHFFN), 645–677 (FATSSSSSSSSPSSSSSSPSKRRKLEQGMGAGA), 746–775 (GVVSSGRSSSSGATSSGAASGEEAPRKSGS), 840–876 (APTTGSVSGSGSGSGSSGSSSTTSSGSGLHHGSRSKM), 886–905 (KCNSRAQQQQQQSATLASGS), 922–955 (AATKASTSSKSSSHSCCQTAEAPSSMTSQSNGCT), and 1067–1122 (AAPA…DTAA). Residues 266–298 (SGTSSSSSSTSSSSSSSSSSSRTRSSGQRSSGR) are compositionally biased toward low complexity. 2 stretches are compositionally biased toward basic residues: residues 300-310 (GHGHVHSHQHP) and 321-352 (SHGHGHGHSHGNGHGHHHHHHHHHHHHHHHHN). A compositionally biased stretch (low complexity) spans 375–397 (PSSSGASGSAPATGTGQSQSSST). A compositionally biased stretch (basic residues) spans 596–610 (KHRHYHGQGHGHGHG). 6 stretches are compositionally biased toward low complexity: residues 612–627 (GHSSSSSSSSSSSSSH), 648–663 (SSSSSSSSPSSSSSSP), 746–766 (GVVSSGRSSSSGATSSGAASG), 856–867 (SGSSSTTSSGSG), 889–903 (SRAQQQQQQSATLAS), and 922–936 (AATKASTSSKSSSHS). Polar residues-rich tracts occupy residues 937–954 (CCQTAEAPSSMTSQSNGC) and 1071–1085 (NSITGNSSNANVNGN). Residues 1086–1107 (TSTAPATAATSAAAAPTAAPPS) are compositionally biased toward low complexity.

Interacts with PRC1 complex member polycomb protein Pc; the interaction targets Pc for ubiquitin-independent proteasomal degradation. Does not interact with PRC1 members Ph, Psc or Sce so does not appear to be a member of the PRC1 complex. Interacts with 26S proteasome regulatory subunit Rpn10.

Its subcellular location is the nucleus. Its function is as follows. Facilitates ubiquitin-independent proteasomal degradation of polycomb protein Pc by interacting directly with the proteasome and recruiting Pc to it. The sequence is that of Midnolin homolog from Drosophila melanogaster (Fruit fly).